Reading from the N-terminus, the 464-residue chain is L-cystine uptake protein TcyP (464 aa).

10 consecutive transmembrane segments (helical) span residues 3–23 (TLLVGINVAVMLILVGVLYYM), 34–54 (VFTALGVGIIFGLILQFIYEP), 73–93 (YVKLLQMIVMPLILVSIISAF), 107–127 (GLIIGILILTTGIAAAVGIAA), 184–204 (PTSTISVVIFAAFIGIAFIGV), 225–245 (IVMRMVTLILRLTPYGVLALM), 263–283 (FVLASYVALIVMFVIHLLLIA), 347–367 (AGIYPAMLAMMVAPTVGIDPL), 371–391 (FILTLIAVVAISSFGVAGVGG), and 395–415 (FAALIVLSTMNLPIGIVALVI).

This sequence belongs to the dicarboxylate/amino acid:cation symporter (DAACS) (TC 2.A.23) family.

The protein resides in the membrane. Functionally, mediates uptake of L-cystine, the oxidized form of L-cysteine. The sequence is that of L-cystine uptake protein TcyP from Bacillus cereus (strain ATCC 10987 / NRS 248).